The chain runs to 144 residues: Lysozyme C II (144 aa).

The signal sequence occupies residues 1–15; the sequence is MRAVVVLLLVAVASA. Residues 16-144 form the C-type lysozyme domain; that stretch reads KVYDRCELAR…LRSYVAGCGV (129 aa). 4 disulfides stabilise this stretch: C21-C142, C45-C130, C79-C95, and C91-C109. Active-site residues include E50 and D67.

The protein localises to the secreted. The catalysed reaction is Hydrolysis of (1-&gt;4)-beta-linkages between N-acetylmuramic acid and N-acetyl-D-glucosamine residues in a peptidoglycan and between N-acetyl-D-glucosamine residues in chitodextrins.. Functionally, lysozymes have primarily a bacteriolytic function; those in tissues and body fluids are associated with the monocyte-macrophage system and enhance the activity of immunoagents. Has antibacterial activity against the Gram positive bacterium P.citreus. Has no antibacterial activity against the Gram negative bacteria E.coli and Y.ruckeri. Does not have hemolytic activity against trout erythrocytes. This Oncorhynchus mykiss (Rainbow trout) protein is Lysozyme C II.